Reading from the N-terminus, the 172-residue chain is MRKVKPARKLGRTAAHRRATLSSLSTQLILHKRIETTEAKAKETRKVVEKIITKALKGTVHAQREIFKDIRDKEAIKTLFGEVVAKVGDRPGGYTRIIKLCPRFGDAAKMAVIELVDFAEAPVAAPKAAKQDRAKRVKGSKKVTGDVAPAVAPVPSAPAETQEEAKAPESAE.

The interval 127-172 (KAAKQDRAKRVKGSKKVTGDVAPAVAPVPSAPAETQEEAKAPESAE) is disordered. The span at 147–159 (VAPAVAPVPSAPA) shows a compositional bias: low complexity. The segment covering 163 to 172 (EEAKAPESAE) has biased composition (basic and acidic residues).

Belongs to the bacterial ribosomal protein bL17 family. As to quaternary structure, part of the 50S ribosomal subunit. Contacts protein L32.

This Chlorobium luteolum (strain DSM 273 / BCRC 81028 / 2530) (Pelodictyon luteolum) protein is Large ribosomal subunit protein bL17.